A 288-amino-acid polypeptide reads, in one-letter code: Ribonuclease HIII (288 aa).

One can recognise an RNase H type-2 domain in the interval 76–288 (YSAIGSDEVG…KNITKQFIKN (213 aa)). Residues Asp-82, Glu-83, and Asp-185 each coordinate a divalent metal cation.

It belongs to the RNase HII family. RnhC subfamily. The cofactor is Mn(2+). It depends on Mg(2+) as a cofactor.

Its subcellular location is the cytoplasm. It carries out the reaction Endonucleolytic cleavage to 5'-phosphomonoester.. Endonuclease that specifically degrades the RNA of RNA-DNA hybrids. This is Ribonuclease HIII from Phytoplasma mali (strain AT).